A 1193-amino-acid chain; its full sequence is DNA-directed RNA polymerase subunit beta (1193 aa).

The segment at 1173–1193 (QQAKEAAELEKAKEEALDKTE) is disordered. Positions 1177–1193 (EAAELEKAKEEALDKTE) are enriched in basic and acidic residues.

The protein belongs to the RNA polymerase beta chain family. As to quaternary structure, the RNAP catalytic core consists of 2 alpha, 1 beta, 1 beta' and 1 omega subunit. When a sigma factor is associated with the core the holoenzyme is formed, which can initiate transcription.

The catalysed reaction is RNA(n) + a ribonucleoside 5'-triphosphate = RNA(n+1) + diphosphate. Functionally, DNA-dependent RNA polymerase catalyzes the transcription of DNA into RNA using the four ribonucleoside triphosphates as substrates. This chain is DNA-directed RNA polymerase subunit beta, found in Streptococcus thermophilus (strain CNRZ 1066).